We begin with the raw amino-acid sequence, 764 residues long: Bifunctional type I diterpene synthase tndC (764 aa).

Positions 1-324 (MEYRYSTVVD…CPRYHPWSSY (324 aa)) are terpene cyclase. Mg(2+) is bound by residues Asp-92 and Asp-96. A DDXXD 1 motif is present at residues 92–96 (DDVTD). Positions 224-232 (NDLYSWQKE) match the NSE/DTE motif. The tract at residues 325 to 761 (NERQLDWMKN…FQLRLILEML (437 aa)) is prenyltransferase. A disordered region spans residues 377–403 (AVNGNGASHTSSIKGSTGGNGVTHSPV). Over residues 381 to 391 (NGASHTSSIKG) the composition is skewed to polar residues. Residues Lys-484, Arg-487, and His-516 each coordinate isopentenyl diphosphate. 2 residues coordinate Mg(2+): Asp-523 and Asp-527. Residues 523-527 (DDLED) carry the DDXXD 2 motif. Position 532 (Arg-532) interacts with dimethylallyl diphosphate. Arg-533 is an isopentenyl diphosphate binding site. Lys-610, Thr-611, Gln-646, Asn-653, Lys-663, and Lys-673 together coordinate dimethylallyl diphosphate.

In the N-terminal section; belongs to the terpene synthase family. It in the C-terminal section; belongs to the FPP/GGPP synthase family.

It catalyses the reaction isopentenyl diphosphate + (2E,6E)-farnesyl diphosphate = (2E,6E,10E)-geranylgeranyl diphosphate + diphosphate. The enzyme catalyses (2E,6E,10E)-geranylgeranyl diphosphate = talarodiene + diphosphate. It functions in the pathway secondary metabolite biosynthesis; terpenoid biosynthesis. In terms of biological role, bifunctional type I diterpene synthase; part of the gene cluster that mediates the biosynthesis of talaronoid C, a fusicoccane diterpenoid with an unprecedented tricyclic 5/8/6 ring system. The first step in the pathway is performed by the fusicoccadiene synthase tndC that possesses both prenyl transferase and terpene cyclase activity, converting isopentenyl diphosphate and dimethylallyl diphosphate into geranylgeranyl diphosphate (GGDP) and further converting GGDP into talarodiene, a precursor for talaronoid C. The remaining enzymes from the cluster include the cytochrome P450 monooxygenase tndB, the aldehyde reductase tndE and the alcohol dehydrogenase tndF that are involved in the conversion of talarodiene into talaronoid C. This is Bifunctional type I diterpene synthase tndC from Aspergillus flavipes.